Here is a 504-residue protein sequence, read N- to C-terminus: Histidine ammonia-lyase (504 aa).

Positions 142-144 (ASG) form a cross-link, 5-imidazolinone (Ala-Gly). S143 carries the post-translational modification 2,3-didehydroalanine (Ser).

It belongs to the PAL/histidase family. In terms of processing, contains an active site 4-methylidene-imidazol-5-one (MIO), which is formed autocatalytically by cyclization and dehydration of residues Ala-Ser-Gly.

It localises to the cytoplasm. It carries out the reaction L-histidine = trans-urocanate + NH4(+). It participates in amino-acid degradation; L-histidine degradation into L-glutamate; N-formimidoyl-L-glutamate from L-histidine: step 1/3. The polypeptide is Histidine ammonia-lyase (Staphylococcus aureus (strain bovine RF122 / ET3-1)).